The primary structure comprises 245 residues: MKIVISPAKKMQTDGGFLPKSQPVFLDQAEELWSYLHSLDQAGLEKVWRANAKITEEARQMLAADLTQPQLPALFAYSGLQYQYLAADVLDQAGLDYLDQHLRVLSGLYGSLRPFDGIVPYRLEMKSPLPAFKYKSLYEFWGEKVYQELYQDDSVVLNLASKEYSHLLTPFLKEGDRLLEVVFQEEKNGKWRTQATHAKMARGRLVRWLAEGGRDLSDLQGFTDFGYAFAPDQSGEDRVVFRKKA.

Belongs to the UPF0246 family.

The chain is UPF0246 protein LBUL_1917 from Lactobacillus delbrueckii subsp. bulgaricus (strain ATCC BAA-365 / Lb-18).